Consider the following 291-residue polypeptide: Formamidopyrimidine-DNA glycosylase (291 aa).

Proline 2 (schiff-base intermediate with DNA) is an active-site residue. Residue glutamate 3 is the Proton donor of the active site. The active-site Proton donor; for beta-elimination activity is the lysine 58. Histidine 104, arginine 123, and lysine 166 together coordinate DNA. The segment at 257–291 (KVYDREGKPCPTCGGTVQRFVQNGRSTFWCPKCQK) adopts an FPG-type zinc-finger fold. Arginine 281 functions as the Proton donor; for delta-elimination activity in the catalytic mechanism.

It belongs to the FPG family. In terms of assembly, monomer. The cofactor is Zn(2+).

It catalyses the reaction Hydrolysis of DNA containing ring-opened 7-methylguanine residues, releasing 2,6-diamino-4-hydroxy-5-(N-methyl)formamidopyrimidine.. The catalysed reaction is 2'-deoxyribonucleotide-(2'-deoxyribose 5'-phosphate)-2'-deoxyribonucleotide-DNA = a 3'-end 2'-deoxyribonucleotide-(2,3-dehydro-2,3-deoxyribose 5'-phosphate)-DNA + a 5'-end 5'-phospho-2'-deoxyribonucleoside-DNA + H(+). Involved in base excision repair of DNA damaged by oxidation or by mutagenic agents. Acts as a DNA glycosylase that recognizes and removes damaged bases. Has a preference for oxidized purines, such as 7,8-dihydro-8-oxoguanine (8-oxoG). Has AP (apurinic/apyrimidinic) lyase activity and introduces nicks in the DNA strand. Cleaves the DNA backbone by beta-delta elimination to generate a single-strand break at the site of the removed base with both 3'- and 5'-phosphates. This is Formamidopyrimidine-DNA glycosylase from Rhodopseudomonas palustris (strain TIE-1).